Consider the following 379-residue polypeptide: Cytochrome b (379 aa).

The next 4 helical transmembrane spans lie at 34 to 54 (FGSL…LLAM), 78 to 99 (WFIR…YLHI), 114 to 134 (WNTG…GYVL), and 179 to 199 (FFAL…VHLT). Residues histidine 84 and histidine 98 each coordinate heme b. Histidine 183 and histidine 197 together coordinate heme b. Histidine 202 lines the a ubiquinone pocket. 4 helical membrane passes run 227–247 (LKDI…AFFS), 289–309 (LGGV…PLLH), 321–341 (LSQL…WIGS), and 348–368 (FIII…VLFP).

Belongs to the cytochrome b family. The cytochrome bc1 complex contains 11 subunits: 3 respiratory subunits (MT-CYB, CYC1 and UQCRFS1), 2 core proteins (UQCRC1 and UQCRC2) and 6 low-molecular weight proteins (UQCRH/QCR6, UQCRB/QCR7, UQCRQ/QCR8, UQCR10/QCR9, UQCR11/QCR10 and a cleavage product of UQCRFS1). This cytochrome bc1 complex then forms a dimer. Requires heme b as cofactor.

It is found in the mitochondrion inner membrane. Its function is as follows. Component of the ubiquinol-cytochrome c reductase complex (complex III or cytochrome b-c1 complex) that is part of the mitochondrial respiratory chain. The b-c1 complex mediates electron transfer from ubiquinol to cytochrome c. Contributes to the generation of a proton gradient across the mitochondrial membrane that is then used for ATP synthesis. This Struthio camelus (Common ostrich) protein is Cytochrome b (MT-CYB).